The sequence spans 883 residues: Collagen, type I, alpha 1b (883 aa).

Positions 1-883 are disordered; sequence QMSYVDHSKS…LGGSNDVELR (883 aa). Residues 13-33 show a composition bias toward pro residues; that stretch reads PPQPGPMGPMGPRGPPGPPGS. Low complexity-rich tracts occupy residues 34–57, 113–122, and 129–140; these read SGPQ…AMGS, VPGVMGARGR, and SGARGNDGNTGP. Gly residues-rich tracts occupy residues 147-161 and 185-194; these read TGGE…GNEG and GTDGGPGAKG. 3 stretches are compositionally biased toward low complexity: residues 195–205, 214–223, and 230–248; these read SPGAAGLAGAP, AQGAVGAPGP, and PGAS…PGPA. Positions 285 to 297 are enriched in gly residues; sequence GADGGAGGKGAPG. Low complexity-rich tracts occupy residues 310-326 and 390-402; these read ATGE…PGSK and VGAP…AGPA. Residues 415–424 show a composition bias toward gly residues; the sequence is GAPGLGGPTG. The span at 425 to 444 shows a compositional bias: low complexity; the sequence is ARGAPGPAGNDGAKGEPGAA. Gly residues-rich tracts occupy residues 445–454 and 478–487; these read GAPGGLGAPG and GGKGGDGAPG. The span at 512–542 shows a compositional bias: low complexity; that stretch reads AGPTGPRGETGPPGPAGFAGPPGADGQPGAK. Residues 564–573 are compositionally biased toward gly residues; it reads GPKGGAGPPG. 3 stretches are compositionally biased toward low complexity: residues 574–584, 717–726, and 742–756; these read ATGFPGPAGRV, APGAVGPSGK, and SGPA…PAGA. The span at 757 to 771 shows a compositional bias: basic and acidic residues; that stretch reads KGDRGEAGEAGDRGH. A compositionally biased stretch (low complexity) spans 792 to 812; sequence PAGASGPAGPRGPAGSNGAPG. Over residues 821–836 the composition is skewed to pro residues; it reads AGPPGPPGPAGPPGPP.

This sequence belongs to the fibrillar collagen family.

The polypeptide is Collagen, type I, alpha 1b (Epinephelus costae (Goldblotch grouper)).